The sequence spans 431 residues: ORC1-type DNA replication protein 14 (431 aa).

ATP is bound by residues 62 to 66 (TGKSL), Tyr219, and Arg231.

It belongs to the CDC6/cdc18 family.

Its function is as follows. Involved in regulation of DNA replication. The sequence is that of ORC1-type DNA replication protein 14 (cdc6n) from Haloarcula marismortui (strain ATCC 43049 / DSM 3752 / JCM 8966 / VKM B-1809) (Halobacterium marismortui).